The following is a 321-amino-acid chain: Acetyl-coenzyme A carboxylase carboxyl transferase subunit alpha (321 aa).

Residues 39-293 (RLQQKSQTLA…RRALGDSLRQ (255 aa)) enclose the CoA carboxyltransferase C-terminal domain.

The protein belongs to the AccA family. As to quaternary structure, acetyl-CoA carboxylase is a heterohexamer composed of biotin carboxyl carrier protein (AccB), biotin carboxylase (AccC) and two subunits each of ACCase subunit alpha (AccA) and ACCase subunit beta (AccD).

The protein localises to the cytoplasm. It carries out the reaction N(6)-carboxybiotinyl-L-lysyl-[protein] + acetyl-CoA = N(6)-biotinyl-L-lysyl-[protein] + malonyl-CoA. The protein operates within lipid metabolism; malonyl-CoA biosynthesis; malonyl-CoA from acetyl-CoA: step 1/1. Its function is as follows. Component of the acetyl coenzyme A carboxylase (ACC) complex. First, biotin carboxylase catalyzes the carboxylation of biotin on its carrier protein (BCCP) and then the CO(2) group is transferred by the carboxyltransferase to acetyl-CoA to form malonyl-CoA. This is Acetyl-coenzyme A carboxylase carboxyl transferase subunit alpha from Bordetella avium (strain 197N).